The chain runs to 487 residues: Malonate-semialdehyde dehydrogenase 2 (487 aa).

Residues F154, K178, E181, R182, and S231 each contribute to the NAD(+) site. Catalysis depends on C286, which acts as the Nucleophile. Residue E386 participates in NAD(+) binding.

Belongs to the aldehyde dehydrogenase family. IolA subfamily. As to quaternary structure, homotetramer.

It carries out the reaction 3-oxopropanoate + NAD(+) + CoA + H2O = hydrogencarbonate + acetyl-CoA + NADH + H(+). The catalysed reaction is 2-methyl-3-oxopropanoate + NAD(+) + CoA + H2O = propanoyl-CoA + hydrogencarbonate + NADH + H(+). It participates in polyol metabolism; myo-inositol degradation into acetyl-CoA; acetyl-CoA from myo-inositol: step 7/7. Catalyzes the oxidation of malonate semialdehyde (MSA) and methylmalonate semialdehyde (MMSA) into acetyl-CoA and propanoyl-CoA, respectively. Is involved in a myo-inositol catabolic pathway. Bicarbonate, and not CO2, is the end-product of the enzymatic reaction. The polypeptide is Malonate-semialdehyde dehydrogenase 2 (Bacillus thuringiensis subsp. konkukian (strain 97-27)).